A 341-amino-acid polypeptide reads, in one-letter code: Anthranilate phosphoribosyltransferase (341 aa).

5-phospho-alpha-D-ribose 1-diphosphate-binding positions include glycine 81, glycine 84 to aspartate 85, asparagine 91 to threonine 94, lysine 109 to serine 117, and serine 121. Glycine 81 is a binding site for anthranilate. Serine 93 contacts Mg(2+). Asparagine 112 is an anthranilate binding site. Residue arginine 167 participates in anthranilate binding. Mg(2+) contacts are provided by aspartate 226 and glutamate 227.

It belongs to the anthranilate phosphoribosyltransferase family. Homodimer. Mg(2+) is required as a cofactor.

The catalysed reaction is N-(5-phospho-beta-D-ribosyl)anthranilate + diphosphate = 5-phospho-alpha-D-ribose 1-diphosphate + anthranilate. It participates in amino-acid biosynthesis; L-tryptophan biosynthesis; L-tryptophan from chorismate: step 2/5. In terms of biological role, catalyzes the transfer of the phosphoribosyl group of 5-phosphorylribose-1-pyrophosphate (PRPP) to anthranilate to yield N-(5'-phosphoribosyl)-anthranilate (PRA). This Teredinibacter turnerae (strain ATCC 39867 / T7901) protein is Anthranilate phosphoribosyltransferase.